Reading from the N-terminus, the 351-residue chain is uncharacterized protein (351 aa).

5 residues coordinate Mn(2+): aspartate 215, aspartate 226, histidine 290, glutamate 319, and glutamate 333.

This sequence belongs to the peptidase M24B family. Requires Mn(2+) as cofactor.

This is an uncharacterized protein from Staphylococcus aureus (strain USA300).